Consider the following 416-residue polypeptide: Glutamyl-tRNA reductase 1 (416 aa).

Residues 57–60 (TCNR), Ser-113, 118–120 (DFE), and Gln-124 contribute to the substrate site. The Nucleophile role is filled by Cys-58. 193-198 (GTGKIG) is a binding site for NADP(+).

It belongs to the glutamyl-tRNA reductase family. In terms of assembly, homodimer.

It carries out the reaction (S)-4-amino-5-oxopentanoate + tRNA(Glu) + NADP(+) = L-glutamyl-tRNA(Glu) + NADPH + H(+). It functions in the pathway porphyrin-containing compound metabolism; protoporphyrin-IX biosynthesis; 5-aminolevulinate from L-glutamyl-tRNA(Glu): step 1/2. In terms of biological role, catalyzes the NADPH-dependent reduction of glutamyl-tRNA(Glu) to glutamate 1-semialdehyde (GSA). In Flavobacterium johnsoniae (strain ATCC 17061 / DSM 2064 / JCM 8514 / BCRC 14874 / CCUG 350202 / NBRC 14942 / NCIMB 11054 / UW101) (Cytophaga johnsonae), this protein is Glutamyl-tRNA reductase 1.